The sequence spans 180 residues: MFKLKINNFQLGFKLVQWPVTNHLLKHFYVFPINNKGGLAIKRIISLALFKKRLNKDKINNCHVWEEELPDGSYDMGFNGNFNHMEKRKSGYVTQKQFSEFKDANNQRLIKIETTLAIQGEQINKLTQTVEKQGEQINQLVQVVLLQGASKLENFKWSKKHKDKSLMPAWIVWKIFWWKV.

The protein belongs to the UPF0134 family.

The chain is UPF0134 protein MPN_127 from Mycoplasma pneumoniae (strain ATCC 29342 / M129 / Subtype 1) (Mycoplasmoides pneumoniae).